We begin with the raw amino-acid sequence, 50 residues long: Large ribosomal subunit protein bL33B (50 aa).

This sequence belongs to the bacterial ribosomal protein bL33 family.

The chain is Large ribosomal subunit protein bL33B from Ligilactobacillus salivarius (strain UCC118) (Lactobacillus salivarius).